The primary structure comprises 224 residues: UPF0758 protein Pfl01_5539 (224 aa).

The MPN domain occupies 102-224 (ALENPQVVRD…PLSMAECGWM (123 aa)). Positions 173, 175, and 186 each coordinate Zn(2+). Residues 173-186 (HNHPSGNSDPSQAD) carry the JAMM motif motif.

The protein belongs to the UPF0758 family.

The polypeptide is UPF0758 protein Pfl01_5539 (Pseudomonas fluorescens (strain Pf0-1)).